We begin with the raw amino-acid sequence, 468 residues long: Trehalose-2-sulfate acyltransferase PapA2 (468 aa).

Belongs to the PapA acyltransferase family.

It carries out the reaction 2-O-sulfo-alpha,alpha-trehalose + hexadecanoyl-CoA = 2-O-sulfo-2'-O-hexadecanoyl-alpha,alpha-trehalose + CoA. Required for the biosynthesis of sulfolipid-1 (SL-1), a major mycobacterial cell wall lipid. Catalyzes the acylation of trehalose-2-sulfate by adding the palmitoyl group at the 2'-position to yield the intermediate trehalose-2-sulfate-2'-palmitate (SL659). The chain is Trehalose-2-sulfate acyltransferase PapA2 (papA2) from Mycobacterium bovis (strain ATCC BAA-935 / AF2122/97).